A 1386-amino-acid polypeptide reads, in one-letter code: MAEPVNLIFYNKVMDRTAIKQLISRLIAHFGITYTTHILDQLKTLGFQQATFGAISLGIDDLLTAPSKSWLIEDAEQYGNLSEKHHNYGSLHAVEKLRQLIETWYATSEYLKQEMNPNFRITDPLNPVHMMSFSGARGSTSQVHQLVGMRGLMSDPQGQIIDLPIQSNFREGLSLTEYIISCYGARKGVVDTAVRTSDAGYLTRRLVEVVQHIVVRKVDCGTLYGINVNNLSEKKNNFQQKLIGRVIAENIYIDHRCIAPRNQDIGALLANRLITLKTKQIFLRSPLTCKSMNWICQLCYGWSLSHGNLIEMGEAVGIIAGQSIGEPGTQLTLRTFHTGGVFTGDIAEHVRTPFNGIIEFNENFVYPTRTRHGHPAWMCHTNLFLVIKSKNKVHNLTIPPKSLLLVQNNQYVESKQVIAEIRAKTSPFKEKVQKYIYSNLEGEMHWSTKVRHASEYIHSNIHLILKTCHIWILSGNFHKKNNDLSVLFYKNQDKIDFPISLTKEKNEFSFVKNKTQLNLFLFHFYLYKKNKIFIKSQLTNNILNKINNSKNYNFILQEYNIKKKKNFYFLKNKNLTCPLFLKIKKNGVLKNNEIFAILDDPSYKVKNSGILKYGNIKVDLINQNTNFEDPQTKLFRPRYSIIKEGNFFFIPEEVYVLTQSLSSVFIKNNKFIQAGTLITSNIRSNTNGLVKIQKKGNNNYELKILPGTIYYPNETYKISKQISILIPPGKKLFNEFECKNWTYLQWIMPSKEKPFVLIRPAVEYKISKKLNKSTLFDLLKKNKKVEIKTINYLLYEDDEQIQIINEKNIQLIQTCLLVHWKKKYFFKEANVSFLKIKTKNNFKTFLQISLIEYSNLEKKKEKTISKNVLKKNYYDHFFSISKNELKNKKQGVIRIISNQNNGMQSFIILSSSDLVKTFKFKKLTKNISIKTNTNTSTAKFFEFNKNFKILNKKKKLNLTKKNFSIGLLLFKKLGFLGNLHNIVTNSFSSFYLINYTKLISNKYSIITKFQHTCQNPKWYLIDESKKINKLILGKHINYNLFNWCFPLFSLLKKKIDFQTIKLGQLLFENFVISKYKTSYPSGQIISININYFIIRLAKPYLATGGATIHNNYGEFIKEGDTLITLIYERLKSGDIIQGLPKVEQLLEARPINSVSINLENGFEDWNNDMIKFIGNLWGFFLSTKISMEQGQINLVDQIQKVYQSQGVQISNKHIEIIVRQMTSKVITLEDGMTNVFLPGELIEFSRTQKMNRALEEAVPYKPILLGITKASLNTQSFISEASFQETTRVLAKAALKGRIDWLKGLKENVILGGLVPAGTGSQEVIWQITLEKKKEIYLKKKKEFFTKKINNVFLYQDTFSIFPTTEIIHNVLKESISQNNKNNFSI.

The Zn(2+) site is built by C220, C289, C296, and C299.

It belongs to the RNA polymerase beta' chain family. RpoC2 subfamily. In plastids the minimal PEP RNA polymerase catalytic core is composed of four subunits: alpha, beta, beta', and beta''. When a (nuclear-encoded) sigma factor is associated with the core the holoenzyme is formed, which can initiate transcription. The cofactor is Zn(2+).

The protein localises to the plastid. The protein resides in the chloroplast. The catalysed reaction is RNA(n) + a ribonucleoside 5'-triphosphate = RNA(n+1) + diphosphate. DNA-dependent RNA polymerase catalyzes the transcription of DNA into RNA using the four ribonucleoside triphosphates as substrates. This Marchantia polymorpha (Common liverwort) protein is DNA-directed RNA polymerase subunit beta''.